The chain runs to 219 residues: Ribosome maturation factor RimP (219 aa).

The disordered stretch occupies residues 195-219 (EGRIPGDDLGAEPEDAASTETQEKK).

This sequence belongs to the RimP family.

It is found in the cytoplasm. Its function is as follows. Required for maturation of 30S ribosomal subunits. The sequence is that of Ribosome maturation factor RimP from Brucella melitensis biotype 2 (strain ATCC 23457).